A 436-amino-acid polypeptide reads, in one-letter code: Tol-Pal system protein TolB (436 aa).

The signal sequence occupies residues 1 to 19; sequence MVKCSLIRALMVVAGLVGA.

Belongs to the TolB family. As to quaternary structure, the Tol-Pal system is composed of five core proteins: the inner membrane proteins TolA, TolQ and TolR, the periplasmic protein TolB and the outer membrane protein Pal. They form a network linking the inner and outer membranes and the peptidoglycan layer.

The protein localises to the periplasm. In terms of biological role, part of the Tol-Pal system, which plays a role in outer membrane invagination during cell division and is important for maintaining outer membrane integrity. In Rhizobium etli (strain ATCC 51251 / DSM 11541 / JCM 21823 / NBRC 15573 / CFN 42), this protein is Tol-Pal system protein TolB.